The sequence spans 477 residues: Polyketide synthase-related protein Dhc1 (477 aa).

A Carrier domain is found at 34–112 (EKMTVREGEL…AMTHCVFDRA (79 aa)). An O-(pantetheine 4'-phosphoryl)serine modification is found at S72. The interval 161–322 (LTGATSFLGS…AGEVFLENLV (162 aa)) is ketoreductase (KR) domain. A disordered region spans residues 410–435 (VQQQQQQQQRQSQPPRDDAADGSPTE). The segment covering 411–422 (QQQQQQQQRQSQ) has biased composition (low complexity). Positions 424-435 (PRDDAADGSPTE) are enriched in basic and acidic residues.

It participates in mycotoxin biosynthesis. Its function is as follows. Polyketide synthase-related protein; part of the gene cluster that mediates the biosynthesis of 10,11-dehydrocurvularin, a prevalent fungal phytotoxin with heat shock response and immune-modulatory activities. The highly reducing polyketide synthase Dhc3 is responsible for biosynthesis up to the tetraketide stage. The non-reducing polyketide synthase Dhc5 then conducts four additional chain extension cycles, producing the unreduced part of the nascent octaketide from C-1 to C-8 in 10,11-dehydrocurvularin. The role of Dhc1 in 10,11-dehydrocurvularin biosynthesis has not been identified yet. The polypeptide is Polyketide synthase-related protein Dhc1 (Alternaria cinerariae).